The primary structure comprises 781 residues: Dynamin-related protein dnm1 (781 aa).

The region spanning 23–328 (FLDLPSIVVV…LVSHIRERLP (306 aa)) is the Dynamin-type G domain. Residues 33–40 (GSQSCGKS) are G1 motif. A GTP-binding site is contributed by 33-40 (GSQSCGKS). Positions 59–61 (VTR) are G2 motif. The interval 76 to 103 (KNNHDEESTSDNNSEETSAAGETGSLEG) is disordered. The G3 motif stretch occupies residues 170 to 173 (DLPG). GTP-binding positions include 170–174 (DLPGL) and 239–242 (TKLD). Residues 239 to 242 (TKLD) are G4 motif. The tract at residues 269–272 (VNRS) is G5 motif. One can recognise a GED domain in the interval 694-781 (VDLIKELITS…QANKIISTVF (88 aa)).

Belongs to the TRAFAC class dynamin-like GTPase superfamily. Dynamin/Fzo/YdjA family.

The protein localises to the cytoplasm. It localises to the mitochondrion outer membrane. It carries out the reaction GTP + H2O = GDP + phosphate + H(+). Functionally, microtubule-associated force-producing protein that mediates mitochondrial fission during interphasic growth and at cell division. Fission of mitochondria occurs in many cell types and constitutes an important step in mitochondria morphology, which is balanced between fusion and fission. With vps1, acts redundantly in peroxisome biogenesis, which is under cell cycle control. In Schizosaccharomyces pombe (strain 972 / ATCC 24843) (Fission yeast), this protein is Dynamin-related protein dnm1 (dnm1).